The chain runs to 377 residues: MPKKSIEEWEEDAIESVPYLASDEKGSNYKEATQIPLNLKQSEIENHPTVKPWVHFVAGGIGGMAGAVVTCPFDLVKTRLQSDIFLKAYKSQAVNISKGSTRPKSINYVIQAGTHFKETLGIIGNVYKQEGFRSLFKGLGPNLVGVIPARSINFFTYGTTKDMYAKAFNNGQETPMIHLMAAATAGWATATATNPIWLIKTRVQLDKAGKTSVRQYKNSWDCLKSVIRNEGFTGLYKGLSASYLGSVEGILQWLLYEQMKRLIKERSIEKFGYQAEGTKSTSEKVKEWCQRSGSAGLAKFVASIATYPHEVVRTRLRQTPKENGKRKYTGLVQSFKVIIKEEGLFSMYSGLTPHLMRTVPNSIIMFGTWEIVIRLLS.

Solcar repeat units lie at residues 50–163 (VKPW…TKDM), 173–262 (ETPM…MKRL), and 286–375 (KEWC…VIRL). The next 6 membrane-spanning stretches (helical) occupy residues 53–73 (WVHF…TCPF), 131–151 (GFRS…PARS), 179–199 (LMAA…IWLI), 238–258 (GLSA…LYEQ), 286–306 (KEWC…SIAT), and 347–368 (MYSG…MFGT).

This sequence belongs to the mitochondrial carrier (TC 2.A.29) family.

The protein localises to the mitochondrion inner membrane. The enzyme catalyses 5-methyl-UTP(out) + UTP(in) = 5-methyl-UTP(in) + UTP(out). Mitochondrial transporter that imports/exports pyrimidine nucleotides into and from mitochondria. Selectively transports uridine, thymidine, and cytosine (deoxy)nucleoside di- and triphosphates by an antiport mechanism. Also transports, with lower efficiency, uridine, thymidine, and cytosine (deoxy)nucleoside monophosphates as well as guanosine (deoxy)nucleoside di- and triphosphate. May import (deoxy)nucleoside triphosphates in exchange for intramitochondrial (deoxy)nucleoside monophosphates, thus providing precursors necessary for de novo synthesis of mitochondrial DNA and RNA while exporting products of their catabolism. Mediates the transport of iron and other divalent metal ions like copper and zinc across the mitochondrial inner membrane in a pyrimidine nucleotide-dependent fashion. Catalyzes the co-import of pyrimidine nucleotides and divalent metal ions including ferrous iron. Participates in mitochondrial genome maintenance, regulation of mitochondrial membrane potential and mitochondrial respiration. In Saccharomyces cerevisiae (strain ATCC 204508 / S288c) (Baker's yeast), this protein is Mitochondrial pyrimidine nucleotide transporter RIM2 (RIM2).